Reading from the N-terminus, the 430-residue chain is Protein translocase subunit SecY (430 aa).

10 consecutive transmembrane segments (helical) span residues 18 to 38 (IFFTLAMLVIFKIGTYIPAPG), 68 to 88 (FSIFAMGIVPYITASIVMQLL), 117 to 137 (LAISLAFIQSIGMAFQFNNYL), 147 to 167 (IMSYLLIALVLTAGTAFLIWL), 179 to 199 (GISIIIFAGILSTLPASLIQF), 217 to 237 (VLGLLVSLILLTVGAIYVLEA), 269 to 289 (GVIPVIFAMAFFLLPRTLTLF), 308 to 328 (NVGMVVYIVLIILFTYFYAFV), 368 to 388 (FVGSIFLAVISILPILATKFM), and 389 to 409 (GLPQSIQIGGTSLLIVIGVAI).

This sequence belongs to the SecY/SEC61-alpha family. In terms of assembly, component of the Sec protein translocase complex. Heterotrimer consisting of SecY, SecE and SecG subunits. The heterotrimers can form oligomers, although 1 heterotrimer is thought to be able to translocate proteins. Interacts with the ribosome. Interacts with SecDF, and other proteins may be involved. Interacts with SecA.

The protein localises to the cell membrane. The central subunit of the protein translocation channel SecYEG. Consists of two halves formed by TMs 1-5 and 6-10. These two domains form a lateral gate at the front which open onto the bilayer between TMs 2 and 7, and are clamped together by SecE at the back. The channel is closed by both a pore ring composed of hydrophobic SecY resides and a short helix (helix 2A) on the extracellular side of the membrane which forms a plug. The plug probably moves laterally to allow the channel to open. The ring and the pore may move independently. The protein is Protein translocase subunit SecY of Staphylococcus aureus (strain NCTC 8325 / PS 47).